Reading from the N-terminus, the 298-residue chain is Fe(II)/2-oxoglutarate-dependent dioxygenase nvfF (298 aa).

Residues H137, D139, and H212 each contribute to the Fe cation site.

This sequence belongs to the PhyH family. As to quaternary structure, homodimer. Fe cation serves as cofactor.

It catalyses the reaction fumigatonoid C + 2-oxoglutarate + O2 = novofumigatonin + succinate + CO2 + H2O. It functions in the pathway secondary metabolite biosynthesis; terpenoid biosynthesis. Fe(II)/2-oxoglutarate-dependent dioxygenase; part of the gene cluster that mediates the biosynthesis of novofumigatonin, a heavily oxygenated meroterpenoid containing a unique orthoester moiety. The first step of the pathway is the synthesis of 3,5-dimethylorsellinic acid (DMOA) by the polyketide synthase nvfA via condensation of one acetyl-CoA starter unit with 3 malonyl-CoA units and 2 methylations. DMOA is then converted to farnesyl-DMOA by the farnesyltransferase nvfB. Epoxydation by FAD-dependent monooxygenase nvfK, followed by a protonation-initiated cyclization catalyzed by the terpene cyclase nvfL leads to the production of asnavolin H. The short chain dehydrogenase nvfC then as a 3-OH dehydrogenase of asnovolin H to yield chemesin D. There are two branches to synthesize asnovolin A from chemesin D. In one branch, chemesin D undergoes Baeyer-Villiger oxidation by nvfH, methylation by nvfJ, and enoyl reduction by the nvfM D enoylreductase that reduces the double bond between C-5'and C-6', to form respectively asnovolin I, asnovolin K, and asnovolin A. In the other branch, the methylation precedes the Baeyer-Villiger oxidation and the enoyl reduction to yield asnovolin A via the asnovolin J intermediate. Asnovolin A is further converted to fumigatonoid A by the Fe(II)/2-oxoglutarate-dependent dioxygenase nvfI that catalyzes an endoperoxidation reaction. The alpha/beta hydrolase nvfD then acts as an epimerase that converts fumigatonoid A to its C-5' epimer, which then undergoes spontaneous or nvfD-catalyzed lactonization. The following step utilizes the ketoreductase nvfG to produce fumigatonoid B. The dioxygenase nvfE further converts fumigatonoid B into fumigatonoid C. Finally the Fe(II)/2-oxoglutarate-dependent dioxygenase nvfF catalyzes two rounds of oxidation to transform fumigatonoid C into the end product, novofumigatonin A. In Aspergillus novofumigatus (strain IBT 16806), this protein is Fe(II)/2-oxoglutarate-dependent dioxygenase nvfF.